Reading from the N-terminus, the 423-residue chain is Ribosome biogenesis protein WDR12 homolog (423 aa).

The tract at residues 10-93 (VQVHLKTKQE…EDAIEIEYVE (84 aa)) is ubiquitin-like (UBL) domain. 7 WD repeats span residues 105-142 (LHDD…ILTI), 144-186 (GHTA…NAVE), 193-232 (GHER…AGGD), 253-291 (GHRE…IKTE), 293-332 (STNK…GSIV), 338-378 (GHNA…APLY), and 382-420 (GHGE…VETM).

It belongs to the WD repeat WDR12/YTM1 family.

It is found in the nucleus. The protein resides in the nucleolus. Its subcellular location is the nucleoplasm. In terms of biological role, required for maturation of ribosomal RNAs and formation of the large ribosomal subunit. In Drosophila willistoni (Fruit fly), this protein is Ribosome biogenesis protein WDR12 homolog.